The chain runs to 344 residues: Phenylalanine--tRNA ligase alpha subunit (344 aa).

Glu-256 contributes to the Mg(2+) binding site.

This sequence belongs to the class-II aminoacyl-tRNA synthetase family. Phe-tRNA synthetase alpha subunit type 1 subfamily. In terms of assembly, tetramer of two alpha and two beta subunits. The cofactor is Mg(2+).

Its subcellular location is the cytoplasm. It catalyses the reaction tRNA(Phe) + L-phenylalanine + ATP = L-phenylalanyl-tRNA(Phe) + AMP + diphosphate + H(+). The chain is Phenylalanine--tRNA ligase alpha subunit from Oceanobacillus iheyensis (strain DSM 14371 / CIP 107618 / JCM 11309 / KCTC 3954 / HTE831).